Reading from the N-terminus, the 471-residue chain is MNAAGGGSGAQAAGVAAGNISLSHNALLSTASGATTMPMAQLADGWLELESDPGLFTLLLKDFGCHDVQVEEVYDLQKPIESPYGFIFLFRWIEERRARRKIVETTAEIFVKDEEAISSIFFAQQVVPNSCATHALLSVLLNCNENNLQLGDTLSRLKTHTKGMSPENKGLAIGNTPELACAHNSHAMPQARRRLERTGAGVSSCRFTGEAFHFVSFVPINGQLFELDGLKPYPMNHGGWEDSEDWTDKFRRVMAERLGIATGEQDIRFNLMAVVPDRRIAITHKLKMLRTNQAIVSGTLQKLLKADEQGESGNGDSQRPDTPTTLLEPSAFTARDLQSLLKNLDTEIAINEQHLTDENDRRHMFKVDASRRTHNYDKFICTFLSMLAHQGVLGELVSQHLLPSKKVSGQGAANRISKQSNTASAGGSTTGASASTPKTQQQQAAAAKNGKSPSKTPGRRRKGRNKCRKRK.

In terms of domain architecture, UCH catalytic spans 45-276 (GWLELESDPG…IRFNLMAVVP (232 aa)). C131 (nucleophile) is an active-site residue. Residue H213 is the Proton donor of the active site. Residues 307–326 (DEQGESGNGDSQRPDTPTTL) are disordered. Residues 314–326 (NGDSQRPDTPTTL) show a composition bias toward polar residues. The region spanning 375 to 403 (NYDKFICTFLSMLAHQGVLGELVSQHLLP) is the ULD domain. Residues 405–471 (KKVSGQGAAN…KGRNKCRKRK (67 aa)) are positively charged C-terminal tail required for binding nucleosomes. Residues 412–471 (AANRISKQSNTASAGGSTTGASASTPKTQQQQAAAAKNGKSPSKTPGRRRKGRNKCRKRK) are disordered. Residues 422-447 (TASAGGSTTGASASTPKTQQQQAAAA) are compositionally biased toward low complexity. Residues 457-471 (PGRRRKGRNKCRKRK) are compositionally biased toward basic residues.

This sequence belongs to the peptidase C12 family. BAP1 subfamily. Catalytic component of the polycomb repressive deubiquitinase (PR-DUB) complex, at least composed of caly/calypso, Asx and sba (MBD5/6 homolog). The PR-DUB complex associates with nucleosomes to mediate deubiquitination of histone H2AK118ub1 substrates; the association requires the positively charged C-terminal tail of caly, probably due to direct binding of DNA. Interacts (via ULD domain) with Asx (via DEUBAD domain); the interaction produces a stable heterodimer with a composite binding site for ubiquitin. Homodimerizes (via coiled-coil hinge-region between the UCH and ULD domains) to mediate assembly of 2 copies of the caly-Asx heterodimer into a bisymmetric tetramer; dimerization enhances PR-DUB association with nucleosomes.

The protein resides in the nucleus. It catalyses the reaction Thiol-dependent hydrolysis of ester, thioester, amide, peptide and isopeptide bonds formed by the C-terminal Gly of ubiquitin (a 76-residue protein attached to proteins as an intracellular targeting signal).. In terms of biological role, catalytic component of the polycomb repressive deubiquitinase (PR-DUB) complex, a complex that specifically mediates deubiquitination of histone H2A monoubiquitinated at 'Lys-119' (H2AK118ub1). Mediates bisymmetric organization of the PR-DUB complex and is involved in association with nucleosomes to mediate deubiquitination. Does not deubiquitinate monoubiquitinated histone H2B. Required to maintain the transcriptionally repressive state of homeotic genes throughout development. The PR-DUB complex has weak or no activity toward 'Lys-48'- and 'Lys-63'-linked polyubiquitin chains. Polycomb group (PcG) protein. The sequence is that of Ubiquitin carboxyl-terminal hydrolase calypso from Drosophila sechellia (Fruit fly).